Consider the following 356-residue polypeptide: Methionine import ATP-binding protein MetN 1 (356 aa).

The ABC transporter domain maps to 15–254 (IQIRALNKTY…PVQPITQELL (240 aa)). 51–58 (GKSGAGKS) is an ATP binding site.

This sequence belongs to the ABC transporter superfamily. Methionine importer (TC 3.A.1.24) family. The complex is composed of two ATP-binding proteins (MetN), two transmembrane proteins (MetI) and a solute-binding protein (MetQ).

The protein resides in the cell inner membrane. It catalyses the reaction L-methionine(out) + ATP + H2O = L-methionine(in) + ADP + phosphate + H(+). The catalysed reaction is D-methionine(out) + ATP + H2O = D-methionine(in) + ADP + phosphate + H(+). Functionally, part of the ABC transporter complex MetNIQ involved in methionine import. Responsible for energy coupling to the transport system. This Acinetobacter baylyi (strain ATCC 33305 / BD413 / ADP1) protein is Methionine import ATP-binding protein MetN 1.